Here is a 229-residue protein sequence, read N- to C-terminus: 5'-methylthioadenosine/S-adenosylhomocysteine nucleosidase (229 aa).

The Proton acceptor role is filled by Glu12. Substrate is bound by residues Gly78, Ile152, and 173-174 (ME). Asp197 (proton donor) is an active-site residue.

The protein belongs to the PNP/UDP phosphorylase family. MtnN subfamily.

The enzyme catalyses S-adenosyl-L-homocysteine + H2O = S-(5-deoxy-D-ribos-5-yl)-L-homocysteine + adenine. The catalysed reaction is S-methyl-5'-thioadenosine + H2O = 5-(methylsulfanyl)-D-ribose + adenine. It carries out the reaction 5'-deoxyadenosine + H2O = 5-deoxy-D-ribose + adenine. It functions in the pathway amino-acid biosynthesis; L-methionine biosynthesis via salvage pathway; S-methyl-5-thio-alpha-D-ribose 1-phosphate from S-methyl-5'-thioadenosine (hydrolase route): step 1/2. Its function is as follows. Catalyzes the irreversible cleavage of the glycosidic bond in both 5'-methylthioadenosine (MTA) and S-adenosylhomocysteine (SAH/AdoHcy) to adenine and the corresponding thioribose, 5'-methylthioribose and S-ribosylhomocysteine, respectively. Also cleaves 5'-deoxyadenosine, a toxic by-product of radical S-adenosylmethionine (SAM) enzymes, into 5-deoxyribose and adenine. This is 5'-methylthioadenosine/S-adenosylhomocysteine nucleosidase from Mannheimia succiniciproducens (strain KCTC 0769BP / MBEL55E).